A 457-amino-acid polypeptide reads, in one-letter code: MASTCSGCGPGYKTPLDAMKGPREEIVYLPCIYRNTDIQKPDYLATVDINPQSPNFCKVIHRLPMPNLKDELHHSGWNACSSCFDDPSKRRNRLILPSLISSRIYVVDVGTDPRAPRLHKTVEPTDLFWKCGLANPHTSHCLGSGQIMISTMGDPSGNGKGGFVLLDGETFEVIGNWEQPGDAAPFGYDFWYQPRHNVMISTEWGAPKALGNGFNPADVKAGHYGQRLHVWDWTTHKRIQTLDLGEEGAIPLEVRFLHDPAAAEGFVGCALQSTVFRFYKTPKGDWAAEKVIKVPSKKVEGWALPDMPGLITDILISLDDRFLYFSNWLHGDIRQYDITDRKNPRMVGQVFLGGSVLKDGPVKVLEDKELDSQPTPRILKGKRLYVTTSLYSAWDKQFYPDLIKEGSVMMQIDVNTDTGGLKLNENFLVDFGAEPEGPALAHELRYPGGDCTSDIWL.

It belongs to the selenium-binding protein family.

It is found in the nucleus. The protein localises to the cytoplasm. The protein resides in the cytosol. Its subcellular location is the membrane. The enzyme catalyses methanethiol + O2 + H2O = hydrogen sulfide + formaldehyde + H2O2 + H(+). Its pathway is organosulfur degradation. Functionally, catalyzes the oxidation of methanethiol, an organosulfur compound known to be produced in substantial amounts by gut bacteria. Selenium-binding protein which may be involved in the sensing of reactive xenobiotics in the cytoplasm. May be involved in intra-Golgi protein transport. The sequence is that of Methanethiol oxidase (selenbp1) from Danio rerio (Zebrafish).